Here is a 104-residue protein sequence, read N- to C-terminus: Small ribosomal subunit protein bS16 (104 aa).

The protein belongs to the bacterial ribosomal protein bS16 family.

This is Small ribosomal subunit protein bS16 from Wolbachia pipientis subsp. Culex pipiens (strain wPip).